We begin with the raw amino-acid sequence, 502 residues long: MSSLNTRARAVFSAAVEGVHPDMVVRRGLERHGDKLHVGGQSFTLTNNLYLVGFGKAVLGMAAEAERIVGDHLIKGVVSVPHGIQNTLRSHGKEKMLLESNSRITVMEGAKHNLPDTDAQKSAECIRDLASSLTEKDLLLVLISGGGSALLPAPAPPMSLQEKQDVTRKLAAAGATIQELNTVRRALSLLKGGGLAQCASPAKVVALILSDVIGDPLDLIASGPTVRSDSSPEEVWAILDNYKLSDSLPSSVKEVLSKSISGQGSGVKNQPQEVKDNVLNVVIGSNTIALECASRKASELGLRPVILSPGVCGDVRSVARLYGLLSSFACSPGKEPPPELAAEILKLGPEVGIESWDLCRTMNVLVGERKEGWGATCLLAGGEPTVKLSGKGRGGRNQELAMRVGLELSQGEVKSGAVFLSGGTDGQDGPTEAAGAVADGELKEEAASQGLDTDSFLANNDSFTFFSKLSEGRRLLNPGLTGTNVMDVHVMLLPPSPQKDLQ.

It belongs to the glycerate kinase type-2 family.

It localises to the cytoplasm. It catalyses the reaction (R)-glycerate + ATP = (2R)-3-phosphoglycerate + ADP + H(+). The protein is Glycerate kinase (glyctk) of Danio rerio (Zebrafish).